Here is a 413-residue protein sequence, read N- to C-terminus: Exodeoxyribonuclease 7 large subunit (413 aa).

It belongs to the XseA family. As to quaternary structure, heterooligomer composed of large and small subunits.

The protein resides in the cytoplasm. It carries out the reaction Exonucleolytic cleavage in either 5'- to 3'- or 3'- to 5'-direction to yield nucleoside 5'-phosphates.. Bidirectionally degrades single-stranded DNA into large acid-insoluble oligonucleotides, which are then degraded further into small acid-soluble oligonucleotides. The sequence is that of Exodeoxyribonuclease 7 large subunit from Corynebacterium efficiens (strain DSM 44549 / YS-314 / AJ 12310 / JCM 11189 / NBRC 100395).